The chain runs to 179 residues: Inner membrane-spanning protein YciB (179 aa).

5 helical membrane passes run 22–42 (IYAA…YSWV), 50–70 (MALI…FFHN), 76–96 (WKVT…QWVM), 121–141 (LAWA…AFWL), and 149–169 (FKVF…GIYI).

This sequence belongs to the YciB family.

It is found in the cell inner membrane. In terms of biological role, plays a role in cell envelope biogenesis, maintenance of cell envelope integrity and membrane homeostasis. The protein is Inner membrane-spanning protein YciB of Shigella boydii serotype 18 (strain CDC 3083-94 / BS512).